The sequence spans 1040 residues: Multidrug resistance protein MdtB (1040 aa).

The next 12 helical transmembrane spans lie at 16-36, 347-367, 369-389, 396-416, 440-460, 472-492, 537-557, 863-883, 888-908, 911-931, 968-988, and 998-1018; these read FIMR…AGII, LMMA…NIPA, IIPG…MVFL, LTLM…IVVI, IGFT…PLLF, FAIT…TLTP, WLTL…WVFI, LGST…VLGI, FIHP…ALLA, IAGS…IGIV, ILMT…STGV, and IGMV…TPVI.

Belongs to the resistance-nodulation-cell division (RND) (TC 2.A.6) family. MdtB subfamily. As to quaternary structure, part of a tripartite efflux system composed of MdtA, MdtB and MdtC. MdtB forms a heteromultimer with MdtC.

The protein resides in the cell inner membrane. The MdtABC tripartite complex confers resistance against novobiocin and deoxycholate. This Escherichia coli (strain K12 / MC4100 / BW2952) protein is Multidrug resistance protein MdtB.